The sequence spans 392 residues: Formate-dependent phosphoribosylglycinamide formyltransferase (392 aa).

Residues 22–23 (EL) and glutamate 82 each bind N(1)-(5-phospho-beta-D-ribosyl)glycinamide. ATP contacts are provided by residues arginine 114, lysine 155, 160 to 165 (SSGKGQ), 195 to 198 (EGVV), and glutamate 203. The region spanning 119–308 (RLAAEELQLP…EFALHVRAFL (190 aa)) is the ATP-grasp domain. Glutamate 267 and glutamate 279 together coordinate Mg(2+). Residues aspartate 286, lysine 355, and 362–363 (RR) each bind N(1)-(5-phospho-beta-D-ribosyl)glycinamide.

The protein belongs to the PurK/PurT family. As to quaternary structure, homodimer.

The catalysed reaction is N(1)-(5-phospho-beta-D-ribosyl)glycinamide + formate + ATP = N(2)-formyl-N(1)-(5-phospho-beta-D-ribosyl)glycinamide + ADP + phosphate + H(+). The protein operates within purine metabolism; IMP biosynthesis via de novo pathway; N(2)-formyl-N(1)-(5-phospho-D-ribosyl)glycinamide from N(1)-(5-phospho-D-ribosyl)glycinamide (formate route): step 1/1. Its function is as follows. Involved in the de novo purine biosynthesis. Catalyzes the transfer of formate to 5-phospho-ribosyl-glycinamide (GAR), producing 5-phospho-ribosyl-N-formylglycinamide (FGAR). Formate is provided by PurU via hydrolysis of 10-formyl-tetrahydrofolate. In Shigella dysenteriae serotype 1 (strain Sd197), this protein is Formate-dependent phosphoribosylglycinamide formyltransferase.